Reading from the N-terminus, the 159-residue chain is Small ribosomal subunit protein uS9 (159 aa).

It belongs to the universal ribosomal protein uS9 family.

This chain is Small ribosomal subunit protein uS9, found in Rickettsia africae (strain ESF-5).